We begin with the raw amino-acid sequence, 196 residues long: Peptidyl-tRNA hydrolase (196 aa).

Y18 serves as a coordination point for tRNA. The active-site Proton acceptor is the H23. The tRNA site is built by F69, N71, and N117.

The protein belongs to the PTH family. As to quaternary structure, monomer.

It is found in the cytoplasm. It catalyses the reaction an N-acyl-L-alpha-aminoacyl-tRNA + H2O = an N-acyl-L-amino acid + a tRNA + H(+). Hydrolyzes ribosome-free peptidyl-tRNAs (with 1 or more amino acids incorporated), which drop off the ribosome during protein synthesis, or as a result of ribosome stalling. Its function is as follows. Catalyzes the release of premature peptidyl moieties from peptidyl-tRNA molecules trapped in stalled 50S ribosomal subunits, and thus maintains levels of free tRNAs and 50S ribosomes. The protein is Peptidyl-tRNA hydrolase of Marinobacter nauticus (strain ATCC 700491 / DSM 11845 / VT8) (Marinobacter aquaeolei).